We begin with the raw amino-acid sequence, 110 residues long: UPF0060 membrane protein Pnap_4944 (110 aa).

Transmembrane regions (helical) follow at residues 8–28 (ILFAVTALAEIVGCYLPWLVL), 33–53 (SLLLLVPAAMSLGLFAWLLTL), 65–85 (YGGMYIAVALGWLRFVDGIAL), and 88–108 (WDLSGAAIALVGMAVIVMQPS).

Belongs to the UPF0060 family.

Its subcellular location is the cell inner membrane. The polypeptide is UPF0060 membrane protein Pnap_4944 (Polaromonas naphthalenivorans (strain CJ2)).